The following is a 101-amino-acid chain: Replication restart protein PriB (101 aa).

One can recognise an SSB domain in the interval 1-101 (MTTNNLVLAG…LHAENVELKT (101 aa)).

The protein belongs to the PriB family. As to quaternary structure, homodimer. Interacts with PriA and DnaT. Component of the replication restart primosome. Primosome assembly occurs via a 'hand-off' mechanism. PriA binds to replication forks, subsequently PriB then DnaT bind; DnaT then displaces ssDNA to generate the helicase loading substrate.

Functionally, involved in the restart of stalled replication forks, which reloads the replicative helicase on sites other than the origin of replication; the PriA-PriB pathway is the major replication restart pathway. During primosome assembly it facilitates complex formation between PriA and DnaT on DNA; stabilizes PriA on DNA. Stimulates the DNA unwinding activity of PriA helicase. This Shewanella pealeana (strain ATCC 700345 / ANG-SQ1) protein is Replication restart protein PriB.